We begin with the raw amino-acid sequence, 215 residues long: Large ribosomal subunit protein bL25 (215 aa).

A disordered region spans residues 174–215 (ETVVTVQPPATEKEEETEAAVTDSEPEVINEKEEPAEEAKEE). Residues 186-215 (KEEETEAAVTDSEPEVINEKEEPAEEAKEE) show a composition bias toward acidic residues.

Belongs to the bacterial ribosomal protein bL25 family. CTC subfamily. In terms of assembly, part of the 50S ribosomal subunit; part of the 5S rRNA/L5/L18/L25 subcomplex. Contacts the 5S rRNA. Binds to the 5S rRNA independently of L5 and L18.

Functionally, this is one of the proteins that binds to the 5S RNA in the ribosome where it forms part of the central protuberance. The chain is Large ribosomal subunit protein bL25 from Halalkalibacterium halodurans (strain ATCC BAA-125 / DSM 18197 / FERM 7344 / JCM 9153 / C-125) (Bacillus halodurans).